Reading from the N-terminus, the 103-residue chain is Flagellar hook-basal body complex protein FliE (103 aa).

This sequence belongs to the FliE family.

The protein resides in the bacterial flagellum basal body. This chain is Flagellar hook-basal body complex protein FliE, found in Helicobacter hepaticus (strain ATCC 51449 / 3B1).